The following is a 325-amino-acid chain: Methionyl-tRNA formyltransferase (325 aa).

A (6S)-5,6,7,8-tetrahydrofolate-binding site is contributed by 111–114 (SILP).

It belongs to the Fmt family.

It carries out the reaction L-methionyl-tRNA(fMet) + (6R)-10-formyltetrahydrofolate = N-formyl-L-methionyl-tRNA(fMet) + (6S)-5,6,7,8-tetrahydrofolate + H(+). In terms of biological role, attaches a formyl group to the free amino group of methionyl-tRNA(fMet). The formyl group appears to play a dual role in the initiator identity of N-formylmethionyl-tRNA by promoting its recognition by IF2 and preventing the misappropriation of this tRNA by the elongation apparatus. The sequence is that of Methionyl-tRNA formyltransferase from Microcystis aeruginosa (strain NIES-843 / IAM M-2473).